Reading from the N-terminus, the 307-residue chain is Serine/threonine-protein phosphatase 4 catalytic subunit (307 aa).

A2 is subject to N-acetylalanine. Positions 54, 56, 82, and 114 each coordinate Mn(2+). Catalysis depends on H115, which acts as the Proton donor. The Mn(2+) site is built by H164 and H238. Residue L307 is modified to Leucine methyl ester.

It belongs to the PPP phosphatase family. PP-4 (PP-X) subfamily. Serine/threonine-protein phosphatase 4 (PP4) occurs in different assemblies of the catalytic and one or more regulatory subunits. Component of the PP4 complexes PPP4C-PPP4R1, PPP4C-PPP4R2, PPP4C-PPP4R2-PPP4R3A, PPP4C-PPP4R2-PPP4R3B and PPP4C-PPP4R4. The PPP4C-PPP4R2 complex appears to be a tetramer composed of 2 molecules of PPP4C and 2 molecules of PPP4R2. Interacts with REL, NFKB1/p50 and RELA. Interacts with SMN1 and GEMIN4. Interacts with IRS4 (phosphorylated). Interacts with SMEK1/PPP4R3A; the interaction requires PP4R2. Interacts with HDAC3. It depends on Mn(2+) as a cofactor. Methylation at the C-terminal Leu-307 is critical for interactions with regulatory subunits and functions in DNA repair.

It localises to the cytoplasm. Its subcellular location is the nucleus. The protein resides in the cytoskeleton. The protein localises to the microtubule organizing center. It is found in the centrosome. It carries out the reaction O-phospho-L-seryl-[protein] + H2O = L-seryl-[protein] + phosphate. The catalysed reaction is O-phospho-L-threonyl-[protein] + H2O = L-threonyl-[protein] + phosphate. Functionally, protein phosphatase that is involved in many processes such as microtubule organization at centrosomes, maturation of spliceosomal snRNPs, apoptosis, DNA repair, tumor necrosis factor (TNF)-alpha signaling, activation of c-Jun N-terminal kinase MAPK8, regulation of histone acetylation, DNA damage checkpoint signaling, NF-kappa-B activation and cell migration. The PPP4C-PPP4R1 PP4 complex may play a role in dephosphorylation and regulation of HDAC3. The PPP4C-PPP4R2-PPP4R3A PP4 complex specifically dephosphorylates H2AX phosphorylated on Ser-140 (gamma-H2AX) generated during DNA replication and required for DNA double strand break repair. Dephosphorylates NDEL1 at CDK1 phosphorylation sites and negatively regulates CDK1 activity in interphase. In response to DNA damage, catalyzes RPA2 dephosphorylation, an essential step for DNA repair since it allows the efficient RPA2-mediated recruitment of RAD51 to chromatin. The sequence is that of Serine/threonine-protein phosphatase 4 catalytic subunit (PPP4C) from Homo sapiens (Human).